The primary structure comprises 186 residues: Temperature-induced lipocalin-1 (186 aa).

The HPR (Hydrophobic proline-rich) motif lies at 90–97 (PPFLPIIP). The segment at 154–174 (KLHKTPQSDTPPESNTAPEDS) is disordered. A compositionally biased stretch (polar residues) spans 158-171 (TPQSDTPPESNTAP).

The protein belongs to the calycin superfamily. Lipocalin family. As to expression, expressed ubiquitously at similar levels, except in dry seeds (at protein level). Present in seeds.

Its subcellular location is the cell membrane. The protein resides in the cytoplasm. It is found in the plastid. The protein localises to the chloroplast membrane. In terms of biological role, involved in basal (BT) and acquired thermotolerance (AT), probably by preventing plasma membrane lipids peroxidation induced by severe heat-shock (HS). Lipocalin that confers protection against oxidative stress caused by heat, freezing, paraquat and light. Confers resistance to high salt (NaCl) levels, probably by protecting chloroplasts from ion toxicity via ion homeostasis maintenance. Required for seed longevity by ensuring polyunsaturated lipids integrity. This Arabidopsis thaliana (Mouse-ear cress) protein is Temperature-induced lipocalin-1.